Reading from the N-terminus, the 92-residue chain is Transcription factor PRE1 (92 aa).

In terms of domain architecture, bHLH spans 4-59 (RRSRQSSSAPRISDNQMIDLVSKLRQILPEIGQRRRSDKASASKVLQETCNYIRNL).

As to quaternary structure, interacts with IBH1 and HFR1. As to expression, expressed in roots, leaves, stems and flowers.

It localises to the nucleus. Functionally, atypical and probable non DNA-binding bHLH transcription factor that integrates multiple signaling pathways to regulate cell elongation and plant development. Binds IBH1, forming a pair of antagonistic bHLH transcription factors that function downstream of BZR1 to mediate brassinosteroid regulation of cell elongation. Regulates light responses by binding and inhibiting the activity of the bHLH transcription factor HFR1, a critical regulator of light signaling and shade avoidance. May have a regulatory role in various aspects of gibberellin-dependent growth and development. The chain is Transcription factor PRE1 (PRE1) from Arabidopsis thaliana (Mouse-ear cress).